The chain runs to 656 residues: DNA ligase (656 aa).

NAD(+) is bound by residues 32 to 36 (DEEYD), 81 to 82 (SM), and glutamate 112. Lysine 114 (N6-AMP-lysine intermediate) is an active-site residue. Arginine 135, glutamate 169, lysine 284, and lysine 308 together coordinate NAD(+). Zn(2+) is bound by residues cysteine 402, cysteine 405, cysteine 418, and cysteine 423. One can recognise a BRCT domain in the interval 577-656 (VQKTPFTGKT…DMWKMLKEGK (80 aa)).

The protein belongs to the NAD-dependent DNA ligase family. LigA subfamily. Mg(2+) serves as cofactor. Requires Mn(2+) as cofactor.

It carries out the reaction NAD(+) + (deoxyribonucleotide)n-3'-hydroxyl + 5'-phospho-(deoxyribonucleotide)m = (deoxyribonucleotide)n+m + AMP + beta-nicotinamide D-nucleotide.. Its function is as follows. DNA ligase that catalyzes the formation of phosphodiester linkages between 5'-phosphoryl and 3'-hydroxyl groups in double-stranded DNA using NAD as a coenzyme and as the energy source for the reaction. It is essential for DNA replication and repair of damaged DNA. The chain is DNA ligase from Nautilia profundicola (strain ATCC BAA-1463 / DSM 18972 / AmH).